The chain runs to 215 residues: Ribosome maturation factor RimP (215 aa).

Residues 180 to 215 (KDNRARKEAKKRRGEPDDDVPEGAEADATEEHEQES) are disordered. A compositionally biased stretch (acidic residues) spans 195-207 (PDDDVPEGAEADA).

Belongs to the RimP family.

It is found in the cytoplasm. Required for maturation of 30S ribosomal subunits. The chain is Ribosome maturation factor RimP from Mesorhizobium japonicum (strain LMG 29417 / CECT 9101 / MAFF 303099) (Mesorhizobium loti (strain MAFF 303099)).